The following is a 515-amino-acid chain: Slowpoke-binding protein (515 aa).

Residues 1–31 (MFKFNKAAQQQRIDNRNSAVTGHDPFVRPPV) form a disordered region. The span at 7–20 (AAQQQRIDNRNSAV) shows a compositional bias: polar residues. Residues S54 and S79 each carry the phosphoserine modification. Positions 73-82 (SSNRSASSEQ) are enriched in polar residues. A disordered region spans residues 73–94 (SSNRSASSEQDNSDLSEHSEKS). Residues 191-203 (NWFLVTDASVRTD) form an interaction with Slo region. Residues 483 to 503 (SLSEANSPCTPPSTPHDRRTG) form a disordered region.

Interacts specifically with Slo; which activates Slo activity. Interacts with 14-3-3-zeta when phosphorylated. Forms a heterotetrameric complex containing phosphorylated Slob, Slo and 14-3-3-zeta, which represses Slo activity due to the indirect interaction between Slo and 14-3-3-zeta. In terms of processing, phosphorylated. Phosphorylation of Ser-54 and Ser-79 is required for the interaction with 14-3-3-zeta but not with that of Slo. In terms of tissue distribution, expressed in head. In larval brain, it is expressed in the mushroom body. Also expressed in larval muscles.

It is found in the cytoplasm. Its function is as follows. Regulator of calcium-activated channel Slo. Increases or decreases the voltage sensitivity of Slo, depending on the absence or presence of 14-3-3-zeta in the complex, respectively. This chain is Slowpoke-binding protein (Slob), found in Drosophila melanogaster (Fruit fly).